A 304-amino-acid polypeptide reads, in one-letter code: ATP synthase gamma chain (304 aa).

The protein belongs to the ATPase gamma chain family. F-type ATPases have 2 components, CF(1) - the catalytic core - and CF(0) - the membrane proton channel. CF(1) has five subunits: alpha(3), beta(3), gamma(1), delta(1), epsilon(1). CF(0) has three main subunits: a, b and c.

Its subcellular location is the cell membrane. Produces ATP from ADP in the presence of a proton gradient across the membrane. The gamma chain is believed to be important in regulating ATPase activity and the flow of protons through the CF(0) complex. This Mycobacterium marinum (strain ATCC BAA-535 / M) protein is ATP synthase gamma chain.